The chain runs to 203 residues: Methyltransferase-like 26 (203 aa).

It belongs to the UPF0585 family.

In Xenopus tropicalis (Western clawed frog), this protein is Methyltransferase-like 26.